We begin with the raw amino-acid sequence, 181 residues long: Large ribosomal subunit protein uL5 (181 aa).

The protein belongs to the universal ribosomal protein uL5 family. In terms of assembly, part of the 50S ribosomal subunit; part of the 5S rRNA/L5/L18/L25 subcomplex. Contacts the 5S rRNA and the P site tRNA. Forms a bridge to the 30S subunit in the 70S ribosome.

Its function is as follows. This is one of the proteins that bind and probably mediate the attachment of the 5S RNA into the large ribosomal subunit, where it forms part of the central protuberance. In the 70S ribosome it contacts protein S13 of the 30S subunit (bridge B1b), connecting the 2 subunits; this bridge is implicated in subunit movement. Contacts the P site tRNA; the 5S rRNA and some of its associated proteins might help stabilize positioning of ribosome-bound tRNAs. This is Large ribosomal subunit protein uL5 from Mesomycoplasma hyopneumoniae (strain 232) (Mycoplasma hyopneumoniae).